The following is a 652-amino-acid chain: tRNA 5-methylaminomethyl-2-thiouridine biosynthesis bifunctional protein MnmC (652 aa).

The tRNA (mnm(5)s(2)U34)-methyltransferase stretch occupies residues 1-235 (MPDRLVPATL…EPALRVGEYA (235 aa)). The FAD-dependent cmnm(5)s(2)U34 oxidoreductase stretch occupies residues 259 to 652 (IGAGLAGCAV…IRALRGRQIG (394 aa)).

This sequence in the N-terminal section; belongs to the methyltransferase superfamily. tRNA (mnm(5)s(2)U34)-methyltransferase family. The protein in the C-terminal section; belongs to the DAO family. FAD serves as cofactor.

It localises to the cytoplasm. It carries out the reaction 5-aminomethyl-2-thiouridine(34) in tRNA + S-adenosyl-L-methionine = 5-methylaminomethyl-2-thiouridine(34) in tRNA + S-adenosyl-L-homocysteine + H(+). Catalyzes the last two steps in the biosynthesis of 5-methylaminomethyl-2-thiouridine (mnm(5)s(2)U) at the wobble position (U34) in tRNA. Catalyzes the FAD-dependent demodification of cmnm(5)s(2)U34 to nm(5)s(2)U34, followed by the transfer of a methyl group from S-adenosyl-L-methionine to nm(5)s(2)U34, to form mnm(5)s(2)U34. The protein is tRNA 5-methylaminomethyl-2-thiouridine biosynthesis bifunctional protein MnmC of Burkholderia ambifaria (strain ATCC BAA-244 / DSM 16087 / CCUG 44356 / LMG 19182 / AMMD) (Burkholderia cepacia (strain AMMD)).